The primary structure comprises 239 residues: MSFQRIAWGITGAGHFLDRSYQVFKELKLRNPELSVNTYVSRAAEEVLRMYGLEQKLVKISGGDYLEEIFRESEQGSSSPKVGRFALDRYDALFVTPATSNTVSKIAYGIADSLVTNAVSQAVKGRVPVFVVPVDIEGSIISEMPYNIDRKQCKHCETCPPRENCPHEAISEKNGVTDQIDLLKCKGCGICKELCPYNAIKGGPVEVLVRDVDMRNVEIVKSLQGITVLESPEAILELF.

4Fe-4S ferredoxin-type domains follow at residues 144–175 (MPYN…EKNG) and 176–205 (VTDQ…GGPV). Residues cysteine 153, cysteine 156, cysteine 159, cysteine 165, cysteine 185, cysteine 188, cysteine 191, and cysteine 195 each contribute to the [4Fe-4S] cluster site.

Homodimer. Requires [4Fe-4S] cluster as cofactor.

It catalyses the reaction 5,6,7,8-tetrahydromethanopterin + A = 7,8-dihydromethanopterin + AH2. It functions in the pathway cofactor biosynthesis; 5,6,7,8-tetrahydromethanopterin biosynthesis. Its function is as follows. Involved in the biosynthesis of tetrahydromethanopterin, a coenzyme used in methanogenesis. Catalyzes the reduction of dihydromethanopterin (H(2)MPT) to tetrahydromethanopterin (H(4)MPT). Ferredoxin may serve as an electron donor. In Methanosarcina mazei (strain ATCC BAA-159 / DSM 3647 / Goe1 / Go1 / JCM 11833 / OCM 88) (Methanosarcina frisia), this protein is Dihydromethanopterin reductase (acceptor).